A 270-amino-acid chain; its full sequence is Putative phosphoenolpyruvate synthase regulatory protein (270 aa).

150 to 157 is a binding site for ADP; sequence GVSRSGKT.

The protein belongs to the pyruvate, phosphate/water dikinase regulatory protein family. PSRP subfamily.

It catalyses the reaction [pyruvate, water dikinase] + ADP = [pyruvate, water dikinase]-phosphate + AMP + H(+). It carries out the reaction [pyruvate, water dikinase]-phosphate + phosphate + H(+) = [pyruvate, water dikinase] + diphosphate. Bifunctional serine/threonine kinase and phosphorylase involved in the regulation of the phosphoenolpyruvate synthase (PEPS) by catalyzing its phosphorylation/dephosphorylation. This is Putative phosphoenolpyruvate synthase regulatory protein from Cupriavidus metallidurans (strain ATCC 43123 / DSM 2839 / NBRC 102507 / CH34) (Ralstonia metallidurans).